A 141-amino-acid chain; its full sequence is Putative pre-16S rRNA nuclease (141 aa).

It belongs to the YqgF nuclease family.

The protein localises to the cytoplasm. Could be a nuclease involved in processing of the 5'-end of pre-16S rRNA. The sequence is that of Putative pre-16S rRNA nuclease from Dictyoglomus turgidum (strain DSM 6724 / Z-1310).